A 62-amino-acid chain; its full sequence is Andropin (62 aa).

The N-terminal stretch at 1 to 22 (MKYFSVLVVLTLILAIVDQSDA) is a signal peptide.

Belongs to the andropin family. Ejaculatory duct of adult males.

It is found in the secreted. Its function is as follows. Male-specific peptide with moderate activity against Gram-positive bacteria. This chain is Andropin (Anp), found in Drosophila teissieri (Fruit fly).